The following is a 164-amino-acid chain: R-phycoerythrin alpha chain (164 aa).

2 residues coordinate (2R,3E)-phycoerythrobilin: Cys82 and Cys139.

This sequence belongs to the phycobiliprotein family. Heterodimer of an alpha and a beta chain. In terms of processing, contains two covalently linked bilin chromophores.

The protein localises to the plastid. It localises to the chloroplast thylakoid membrane. Its function is as follows. Light-harvesting photosynthetic bile pigment-protein from the phycobiliprotein complex. The protein is R-phycoerythrin alpha chain (cpeA) of Pyropia haitanensis (Red seaweed).